A 419-amino-acid chain; its full sequence is Murein hydrolase activator EnvC (419 aa).

Residues 1–34 form the signal peptide; sequence MTRAVKPRRFAIRPIIYASVLSAGVLLCAFSAHA. Coiled coils occupy residues 35–124 and 155–271; these read DERD…LDAA and LNQA…ATRK. Basic and acidic residues predominate over residues 252-270; sequence EREAREAQAVRDRQKEATR. The disordered stretch occupies residues 252–290; it reads EREAREAQAVRDRQKEATRKGTTYKPTESEKSLMSRTGG.

The protein belongs to the peptidase M23B family.

Its subcellular location is the periplasm. Its function is as follows. Activator of the cell wall hydrolases AmiA and AmiB. Required for septal murein cleavage and daughter cell separation during cell division. In vitro, exhibits weak endoproteolytic activity on beta-casein. The sequence is that of Murein hydrolase activator EnvC (envC) from Escherichia coli (strain K12).